Consider the following 432-residue polypeptide: Glutamate-1-semialdehyde 2,1-aminomutase (432 aa).

N6-(pyridoxal phosphate)lysine is present on Lys-272.

This sequence belongs to the class-III pyridoxal-phosphate-dependent aminotransferase family. HemL subfamily. Homodimer. The cofactor is pyridoxal 5'-phosphate.

Its subcellular location is the cytoplasm. The catalysed reaction is (S)-4-amino-5-oxopentanoate = 5-aminolevulinate. The protein operates within porphyrin-containing compound metabolism; protoporphyrin-IX biosynthesis; 5-aminolevulinate from L-glutamyl-tRNA(Glu): step 2/2. Its pathway is porphyrin-containing compound metabolism; chlorophyll biosynthesis. The sequence is that of Glutamate-1-semialdehyde 2,1-aminomutase from Picosynechococcus sp. (strain ATCC 27264 / PCC 7002 / PR-6) (Agmenellum quadruplicatum).